The sequence spans 288 residues: Probable ketoamine kinase VV1_2562 (288 aa).

Residue 92 to 94 participates in ATP binding; it reads NFL. Catalysis depends on Asp195, which acts as the Proton acceptor.

The protein belongs to the fructosamine kinase family.

Its function is as follows. Ketoamine kinase that phosphorylates ketoamines on the third carbon of the sugar moiety to generate ketoamine 3-phosphate. The chain is Probable ketoamine kinase VV1_2562 from Vibrio vulnificus (strain CMCP6).